Here is a 92-residue protein sequence, read N- to C-terminus: Probable glutathione transferase (92 aa).

Residues arginine 1–proline 71 enclose the GST N-terminal domain. Residue cysteine 3 is the Nucleophile of the active site. Glutathione is bound by residues lysine 30, valine 43, and glutamate 55–serine 56.

Belongs to the GST superfamily. Omega family.

The catalysed reaction is RX + glutathione = an S-substituted glutathione + a halide anion + H(+). It catalyses the reaction L-dehydroascorbate + 2 glutathione = glutathione disulfide + L-ascorbate. The enzyme catalyses methylarsonate + 2 glutathione + H(+) = methylarsonous acid + glutathione disulfide + H2O. Exhibits glutathione-dependent thiol transferase activity. Has dehydroascorbate reductase activity and may contribute to the recycling of ascorbic acid. Participates in the biotransformation of inorganic arsenic and reduces monomethylarsonic acid (MMA). The protein is Probable glutathione transferase of Aplysia californica (California sea hare).